Here is a 349-residue protein sequence, read N- to C-terminus: Single-stranded TG1-3 DNA-binding protein (349 aa).

The 83-residue stretch at 45–127 (FRVFVGRLST…REIVVQKARP (83 aa)) folds into the RRM 1 domain. Disordered stretches follow at residues 121–208 (VVQK…PNSI) and 298–349 (EDKQ…AITA). Ser152 carries the phosphoserine modification. Residues 168–179 (ANTATAPSSNEA) are compositionally biased toward polar residues. A compositionally biased stretch (basic and acidic residues) spans 181 to 191 (GVDKKQNEIKG). In terms of domain architecture, RRM 2 spans 206 to 296 (NSIYVSGLSV…LTLVVKSAVF (91 aa)). Basic and acidic residues-rich tracts occupy residues 298 to 310 (EDKQNDENEKNEN) and 327 to 340 (TEPKASEVDSEEKS).

The protein resides in the cytoplasm. It is found in the nucleus. Its subcellular location is the chromosome. The protein localises to the telomere. Its function is as follows. Binds single-stranded telomeric sequences of the type (TG[1-3])n in vitro. Has a role in meiosis. This Schizosaccharomyces pombe (strain 972 / ATCC 24843) (Fission yeast) protein is Single-stranded TG1-3 DNA-binding protein (tcg1).